Here is a 90-residue protein sequence, read N- to C-terminus: Probable Fe(2+)-trafficking protein (90 aa).

The protein belongs to the Fe(2+)-trafficking protein family.

In terms of biological role, could be a mediator in iron transactions between iron acquisition and iron-requiring processes, such as synthesis and/or repair of Fe-S clusters in biosynthetic enzymes. The chain is Probable Fe(2+)-trafficking protein from Nitrosospira multiformis (strain ATCC 25196 / NCIMB 11849 / C 71).